A 469-amino-acid chain; its full sequence is Proline--tRNA ligase (469 aa).

The protein belongs to the class-II aminoacyl-tRNA synthetase family. ProS type 3 subfamily. In terms of assembly, homodimer.

It localises to the cytoplasm. It catalyses the reaction tRNA(Pro) + L-proline + ATP = L-prolyl-tRNA(Pro) + AMP + diphosphate. In terms of biological role, catalyzes the attachment of proline to tRNA(Pro) in a two-step reaction: proline is first activated by ATP to form Pro-AMP and then transferred to the acceptor end of tRNA(Pro). This chain is Proline--tRNA ligase, found in Methanobrevibacter smithii (strain ATCC 35061 / DSM 861 / OCM 144 / PS).